The sequence spans 260 residues: UPF0246 protein Cbei_1739 (260 aa).

This sequence belongs to the UPF0246 family.

In Clostridium beijerinckii (strain ATCC 51743 / NCIMB 8052) (Clostridium acetobutylicum), this protein is UPF0246 protein Cbei_1739.